The following is a 66-amino-acid chain: Surface composition regulator (66 aa).

Belongs to the GlgS family.

Major determinant of cell surface composition. Negatively regulates motility, adhesion and synthesis of biofilm exopolysaccharides. The polypeptide is Surface composition regulator (Shigella dysenteriae serotype 1 (strain Sd197)).